The chain runs to 347 residues: MKNILDYTLEELTLWMKENNESSFRAKQIMSWIYKDVRNFSDMRNMPKSLIAKLEENFEIALPEIEEIYKSELDGTEKFLFKFSDGNLIESVLMRYKHGNSICISTQVGCRMGCKFCASTIDGRIRNLTTGEILAQILVVQNHIGERISNVVLMGSGEPLDNYENVMKFLDIVSAEYGLNIGQRHITLSTCGIVPKIYELADKELSITLAISLHAFSDEKRKEIMPIANKYSIDEILNACKYFVNKTKRRITFEYSLVKDVNDSKEDARALGKLLKGMLCHVNLIPVNEIKERTFKRSSKETIQDFANILSNLGIEVTVRREMGSDINAACGQLRRSYIKTQETRGE.

Residue Glu-90 is the Proton acceptor of the active site. A Radical SAM core domain is found at 96–326; the sequence is YKHGNSICIS…VTVRREMGSD (231 aa). A disulfide bond links Cys-103 and Cys-331. Positions 110, 114, and 117 each coordinate [4Fe-4S] cluster. S-adenosyl-L-methionine-binding positions include 157–158, Ser-189, 212–214, and Asn-288; these read GE and SLH. Cys-331 functions as the S-methylcysteine intermediate in the catalytic mechanism.

The protein belongs to the radical SAM superfamily. RlmN family. [4Fe-4S] cluster serves as cofactor.

It is found in the cytoplasm. The enzyme catalyses adenosine(2503) in 23S rRNA + 2 reduced [2Fe-2S]-[ferredoxin] + 2 S-adenosyl-L-methionine = 2-methyladenosine(2503) in 23S rRNA + 5'-deoxyadenosine + L-methionine + 2 oxidized [2Fe-2S]-[ferredoxin] + S-adenosyl-L-homocysteine. It carries out the reaction adenosine(37) in tRNA + 2 reduced [2Fe-2S]-[ferredoxin] + 2 S-adenosyl-L-methionine = 2-methyladenosine(37) in tRNA + 5'-deoxyadenosine + L-methionine + 2 oxidized [2Fe-2S]-[ferredoxin] + S-adenosyl-L-homocysteine. Specifically methylates position 2 of adenine 2503 in 23S rRNA and position 2 of adenine 37 in tRNAs. The chain is Probable dual-specificity RNA methyltransferase RlmN from Clostridium botulinum (strain Eklund 17B / Type B).